Consider the following 1123-residue polypeptide: MKKRIRSSYKVGSSNKYHKKNYTDNEKDKKKYRSYKEKHINEKMFDKKEFLNFLTNFNKKFMKKNSLVDHLMKMNDKAEDNYDGYNSSGSRYNNINDDGVELCGTKRYTNNKNNSDYDNYNNNNNMKNKRYSNKKHNNDNIIINNNNNKYTDERKYRNKSIKEDVDYTNDYYNIQLNNNKINNNQTKNKIDTIRNISHEKLGNNKSSSARNLSLIQTSHIPYDAPLADFLENGRFLRTFENISLIGQGGFGSVYKVSHRLEPGSPTYAVKFIYLKVSSLDNVSSRRYFREIAANRDIYSKHVVRYYTWWCEEPQFLPMHLMPKEIQNLVKKNKDTFKKRLTKNKKYSNNCISDSSNNNNSSCYSASSYNSSINSNYRNMKLWIKKKEQSPDMKRYKEVLRKNNAPNLVFYSDNDGLTSKNKENPEKNHNPFLSDKNFSDSIYKKKKSHDYNSSSHKLKKRKNKKKKSKKKRKSKSKIKTNAQGIYEESENDEGRDHFQYKKGKEQFSKFIGKLILWVLHKVSKNMILLIMVILSEEDRDLIVFADNEESNGNDQQMIRHDNMNNENVIIKHRNEDDKNGLDGDKNGLDGDKNGLDGDKNGLDGDKNELDDNKNELDDLLMKQKINSLTRNDIVNIENENPAPHATNNIKNKKVDLNGELTYYDYVGKNEVIPNSRTETNVESINTNGMFNNKFSVMKDEGGEYKKKENMTWGDTKRDGLYENGKHEKDGLGVNKCITNKYIENDDDDDDDDDDNNNNNNIDERKKDLKKKQKNAITKGNEDLLATNGTNNKEKRKKDDDINKNMEKIKSYKKKTPVPEFSIVLLLQMELCKGYTLRKWLDRSTRSDKPLHFTYSDKKMNHPLEFDLFKQLIKGLKDIHATCFIHRDLKPENIFVDNDTYTLKIGDLGLVRFIEEKKREKDFNNIDCYKDNIYTDINQNRITSQISIKGQIIGTPGYTAPEGGALCDEKADIYSAALILLELLCPRFTTIMERYKRLNDFRNYYTVPDYVKIHLNPWYILMLQMSKPNPADRPSAADVYSKIKVLLDPHLTDFAFSFNDIHNEHMNKPPQGTNNFERITDNKDKFVIQSVVDMKNKVENEEIPIEKGLNSNVENIKNENNGADK.

Residues 1 to 30 form a disordered region; it reads MKKRIRSSYKVGSSNKYHKKNYTDNEKDKK. Basic and acidic residues predominate over residues 21 to 30; the sequence is NYTDNEKDKK. Residues 245–253 and K270 contribute to the ATP site; that span reads IGQGGFGSV. Disordered regions lie at residues 409-493, 572-609, and 742-800; these read FYSD…NDEG, RNEDDKNGLDGDKNGLDGDKNGLDGDKNGLDGDKNELD, and ENDD…DDDI. Residues 419–428 show a composition bias toward basic and acidic residues; the sequence is KNKENPEKNH. The span at 455–477 shows a compositional bias: basic residues; it reads HKLKKRKNKKKKSKKKRKSKSKI. 5 consecutive repeat copies span residues 576–582, 583–589, 590–596, 597–603, and 604–610. The segment at 576–610 is 5 X 7 AA tandem repeat of D-K-N-[GE]-L-D-[GD]; sequence DKNGLDGDKNGLDGDKNGLDGDKNGLDGDKNELDD. Residues 678–1049 form the Protein kinase domain; it reads TNVESINTNG…KIKVLLDPHL (372 aa). The span at 743 to 754 shows a compositional bias: acidic residues; sequence NDDDDDDDDDDN. The active-site Proton acceptor is the D886. Position 953 is a phosphothreonine (T953).

It belongs to the protein kinase superfamily. Ser/Thr protein kinase family. GCN2 subfamily. May form oligomers in response to stress; oligomerization may result in catalytic activity. Interacts with BIP; the interaction is disrupted in response to stress. Post-translationally, auto-phosphorylated.

It is found in the endoplasmic reticulum membrane. It catalyses the reaction L-seryl-[protein] + ATP = O-phospho-L-seryl-[protein] + ADP + H(+). The catalysed reaction is L-threonyl-[protein] + ATP = O-phospho-L-threonyl-[protein] + ADP + H(+). With respect to regulation, dissociation from BIP and oligomerization, may results autophosphorylation and kinase activity induction. In terms of biological role, during the asexual blood stage, phosphorylates translation factor eIF2alpha in late schizonts resulting in protein translation inhibition. Plays a role in trophozoite differentiation into schizonts. The polypeptide is Eukaryotic translation initiation factor 2-alpha kinase PK4 (Plasmodium falciparum).